Reading from the N-terminus, the 336-residue chain is P2Y purinoceptor 13 (336 aa).

Topologically, residues 1–32 (MLGTVNTTGMQGFNKSERCPRDTRMTQLLFPV) are extracellular. 2 N-linked (GlcNAc...) asparagine glycosylation sites follow: asparagine 6 and asparagine 14. The helical transmembrane segment at 33-53 (LYTVVFFTGVLLNTLALWVFI) threads the bilayer. Residues 54–60 (HIPSNST) are Cytoplasmic-facing. Residues 61 to 81 (FIIYLKNTLVADLIMTLMLPF) traverse the membrane as a helical segment. Over 82–100 (KILSDSRLAPWQLRGFVCT) the chain is Extracellular. Cysteine 99 and cysteine 176 form a disulfide bridge. A helical transmembrane segment spans residues 101-121 (FSSVVFYETMYVGIMMLGLIA). Residues 122 to 144 (FDRFLKIVVPFRKTFVKKTAFAK) are Cytoplasmic-facing. A helical transmembrane segment spans residues 145-165 (IVSISIWLLMFLISLPNMILN). At 166–193 (KEATASTVKKCASLKSPLGLLWHQVVSH) the chain is on the extracellular side. The helical transmembrane segment at 194–214 (TCQFIFWTVFILMLLFYTVIA) threads the bilayer. The Cytoplasmic segment spans residues 215-237 (KKVYDSYRKFKSRDSKHKRLEAK). The helical transmembrane segment at 238–258 (VFIVMAVFFVCFAPFHFVRVP) threads the bilayer. At 259–281 (YTHSQTTNKTDCRLENQLFLAKE) the chain is on the extracellular side. N-linked (GlcNAc...) asparagine glycosylation is present at asparagine 266. Residues 282–302 (STLFLATTNICMDPLIYIILC) form a helical membrane-spanning segment. The Cytoplasmic portion of the chain corresponds to 303–336 (KKFTRKVPCMRWRTKTAASSDEHHSSQTDNITLS).

Belongs to the G-protein coupled receptor 1 family. Highest levels in spleen, liver brain and kidney. Lower but significant level are also detected in intestine, stomach, skeletal muscle, testis, heart and lung.

It is found in the cell membrane. Its function is as follows. Receptor for ADP. Coupled to G(i)-proteins. May play a role in hematopoiesis and the immune system. In Rattus norvegicus (Rat), this protein is P2Y purinoceptor 13 (P2ry13).